The primary structure comprises 470 residues: Zinc finger and BTB domain-containing protein 8A.1-A (470 aa).

Residues cysteine 24–glycine 92 form the BTB domain. The interval glutamate 260–glutamine 280 is disordered. Over residues tryptophan 269–leucine 278 the composition is skewed to polar residues. 2 C2H2-type zinc fingers span residues phenylalanine 316–histidine 338 and tyrosine 344–histidine 367. The segment covering glycine 439 to serine 450 has biased composition (basic and acidic residues). Residues glycine 439 to aspartate 470 form a disordered region.

It is found in the nucleus. Functionally, may be involved in transcriptional regulation. In Xenopus laevis (African clawed frog), this protein is Zinc finger and BTB domain-containing protein 8A.1-A (zbtb8a.1-a).